The primary structure comprises 434 residues: MTTQVVNVIGAGLAGSEAAYQIAKRGVQVRLYEMRPVRQTPAHHTDKFAELVCSNSLRANTLTNAVGVIKEEMRLMDSVIIRAADECSVPAGGALAVDRHEFAAKVTEYVKNHPNVTVVNEEITKIPEGPTVIATGPLTSPDLSAQLKELTGEDYFYFYDAAAPIVEKDSIDMNKVYLKSRYDKGEAAYLNCPMTEEEFDRFYEALIAAETVPLKEFEKEIFFEGCMPVEVMASRGRQTLVFGPMKPVGLEDPKTGKTPYAVVQLRQDDAAGTLYNIVGFQTHLKWGPQKEVLQLIPGLENAEIVRYGVMHRNTFINSPNLLRPTYQYKQRDDLFFAGQMTGVEGYVESAASGLLAGINAARLVKGEEPVVLPPVTAMGSMANYITATNAKNFQPMNANFGLFAPLEKKIKKKAERNEAYATRALETIRNFVNI.

10–15 (GAGLAG) serves as a coordination point for FAD.

The protein belongs to the MnmG family. TrmFO subfamily. The cofactor is FAD.

It is found in the cytoplasm. It carries out the reaction uridine(54) in tRNA + (6R)-5,10-methylene-5,6,7,8-tetrahydrofolate + NADH + H(+) = 5-methyluridine(54) in tRNA + (6S)-5,6,7,8-tetrahydrofolate + NAD(+). The enzyme catalyses uridine(54) in tRNA + (6R)-5,10-methylene-5,6,7,8-tetrahydrofolate + NADPH + H(+) = 5-methyluridine(54) in tRNA + (6S)-5,6,7,8-tetrahydrofolate + NADP(+). Its function is as follows. Catalyzes the folate-dependent formation of 5-methyl-uridine at position 54 (M-5-U54) in all tRNAs. The polypeptide is Methylenetetrahydrofolate--tRNA-(uracil-5-)-methyltransferase TrmFO (Bacillus cereus (strain Q1)).